Reading from the N-terminus, the 93-residue chain is Small ribosomal subunit protein uS19m (93 aa).

This sequence belongs to the universal ribosomal protein uS19 family.

It is found in the mitochondrion. The polypeptide is Small ribosomal subunit protein uS19m (RPS19) (Marchantia polymorpha (Common liverwort)).